The sequence spans 135 residues: Retinol-binding protein 1 (135 aa).

The tract at residues 22 to 32 is important for interaction with STRA6; sequence RALDVNVALRK. 3 residues coordinate all-trans-retinol: Lys-41, Met-63, and Gln-109.

The protein belongs to the calycin superfamily. Fatty-acid binding protein (FABP) family. Interacts (only as retinol-free apoprotein) with STRA6.

It is found in the cytoplasm. It localises to the lipid droplet. Its function is as follows. Cytoplasmic retinol-binding protein. Accepts retinol from the transport protein STRA6, and thereby contributes to retinol uptake, storage and retinoid homeostasis. This is Retinol-binding protein 1 (Rbp1) from Rattus norvegicus (Rat).